A 681-amino-acid chain; its full sequence is Fibulin-1 (681 aa).

The signal sequence occupies residues 1–17 (MDLYMIVLLSLCGLLRA). 33 disulfides stabilise this stretch: Cys29/Cys55, Cys30/Cys62, Cys43/Cys63, Cys72/Cys103, Cys85/Cys104, Cys106/Cys125, Cys107/Cys138, Cys114/Cys139, Cys162/Cys171, Cys167/Cys176, Cys178/Cys191, Cys197/Cys210, Cys204/Cys219, Cys225/Cys237, Cys243/Cys256, Cys250/Cys265, Cys271/Cys283, Cys289/Cys301, Cys317/Cys330, Cys336/Cys348, Cys343/Cys357, Cys359/Cys372, Cys378/Cys390, Cys386/Cys399, Cys401/Cys414, Cys420/Cys429, Cys440/Cys454, Cys460/Cys473, Cys469/Cys482, Cys484/Cys498, Cys504/Cys517, Cys511/Cys526, and Cys531/Cys553. Anaphylatoxin-like domains lie at 29–63 (CCED…EQCC), 68–107 (EDSI…CECC), and 108–139 (LLGS…RSCC). An EGF-like 1 domain is found at 158–192 (TEDQCRAAGCAQRCLNGTCSCLDGFKLKTDGKHCE). Asn173 is a glycosylation site (N-linked (GlcNAc...) asparagine). The EGF-like 2; calcium-binding domain maps to 193-238 (DINECLLGPHHCVTGERCINTLGSYRCQREISCGTGYELTDNNKCK). The EGF-like 3; calcium-binding domain maps to 239 to 284 (DIDECDLGTHNCAAEMECQNTAGSFRCRPRMQCAAGFIQDALGSCI). An EGF-like 4; calcium-binding domain is found at 285-331 (DINECVSVTALSRGQMCFNTVGSFICQRHSVTCGRGYHLNAEGTRCV). The 42-residue stretch at 332 to 373 (DIDECAGPDNSCDGHGCINLVGSYRCECRTGFIFNSISRSCE) folds into the EGF-like 5; calcium-binding domain. One can recognise an EGF-like 6; calcium-binding domain in the interval 374 to 415 (DIDECRNYPGRLCAHKCENILGSYKCSCTAGFKLADDGRNCD). The region spanning 416-455 (DVNECESSPCSQGCANVYGSYQSYCRRGYQLSDADGITCE) is the EGF-like 7; calcium-binding domain. The EGF-like 8; calcium-binding domain occupies 456–499 (DIDECALPTGGHICSYRCHNTPGSFHCTCPASGYTLAANGRSCQ). The EGF-like 9; calcium-binding domain maps to 500–554 (DIDECLTGTHSCSESESCFNIQGGFRCLSFDCPANYRRSGDTRPRVDRADIIRCV).

The protein belongs to the fibulin family. In terms of assembly, homomultimerizes and interacts with various extracellular matrix components such as FN1, LAMA1, NID, AGC1 and CSPG2.

Its subcellular location is the secreted. The protein localises to the extracellular space. It is found in the extracellular matrix. Incorporated into fibronectin-containing matrix fibers. May play a role in cell adhesion and migration along protein fibers within the extracellular matrix (ECM). Could be important for certain developmental processes and contribute to the supramolecular organization of ECM architecture, in particular to those of basement membranes. The protein is Fibulin-1 (fbln1) of Danio rerio (Zebrafish).